A 667-amino-acid polypeptide reads, in one-letter code: DNA ligase (667 aa).

NAD(+) contacts are provided by residues 34–38 (DSEYD), 83–84 (SL), and Glu-112. Lys-114 functions as the N6-AMP-lysine intermediate in the catalytic mechanism. 4 residues coordinate NAD(+): Arg-135, Glu-169, Lys-285, and Lys-309. Zn(2+)-binding residues include Cys-403, Cys-406, Cys-421, and Cys-426. Residues 589–667 (ASDSYFAGKT…EARLISELKK (79 aa)) enclose the BRCT domain.

The protein belongs to the NAD-dependent DNA ligase family. LigA subfamily. Mg(2+) serves as cofactor. Requires Mn(2+) as cofactor.

It catalyses the reaction NAD(+) + (deoxyribonucleotide)n-3'-hydroxyl + 5'-phospho-(deoxyribonucleotide)m = (deoxyribonucleotide)n+m + AMP + beta-nicotinamide D-nucleotide.. In terms of biological role, DNA ligase that catalyzes the formation of phosphodiester linkages between 5'-phosphoryl and 3'-hydroxyl groups in double-stranded DNA using NAD as a coenzyme and as the energy source for the reaction. It is essential for DNA replication and repair of damaged DNA. The chain is DNA ligase from Bacillus licheniformis (strain ATCC 14580 / DSM 13 / JCM 2505 / CCUG 7422 / NBRC 12200 / NCIMB 9375 / NCTC 10341 / NRRL NRS-1264 / Gibson 46).